A 298-amino-acid chain; its full sequence is MQDLSAVKAFHALCQHKSLTAAAKALEQPKSTLSRRLAQLEEDLGQSLLMRQGNRLTLTKAGEVFAVYSEQLLELANKSQEALQELNNQVTGELTLVVHPNLIRGWLSQVLDEFMQQHSTLKIRLLSQFQHSDEVFEPDLIIWIEHAAPMGYRKERLGYWRYATYASPKYLAHRDKPTHPRELIHHPWIDFIACRRAELELHHPEFGSYSLPALESRLQSDNLAMQADAIAKGRGIGLLPTWFANGFETAHPGSLIPCVNGWQSQPTEINCFYPLGRHPLRLRLFIDALRQARPDEWQ.

In terms of domain architecture, HTH lysR-type spans 1 to 59 (MQDLSAVKAFHALCQHKSLTAAAKALEQPKSTLSRRLAQLEEDLGQSLLMRQGNRLTLT). Residues 19 to 38 (LTAAAKALEQPKSTLSRRLA) constitute a DNA-binding region (H-T-H motif).

Belongs to the LysR transcriptional regulatory family.

Its function is as follows. Transcription activation of the irgA gene. In the presence of sufficient iron, transcription of both irgA and irgB is negatively regulated by a fur-like protein. In low iron conditions, negative regulation of transcription is removed, and production of IrgB leads to positive transcriptional activation of irgA. The protein is Iron-regulated virulence regulatory protein IrgB (irgB) of Vibrio cholerae serotype O1 (strain ATCC 39541 / Classical Ogawa 395 / O395).